The following is a 76-amino-acid chain: Sec-independent protein translocase protein TatA (76 aa).

The chain crosses the membrane as a helical span at residues 1–21 (MGSFSIWHWLIVLVIVMLIFG). The tract at residues 47–76 (NADKPAEEAQPTQQVGGHTIDVEVKEKTKS) is disordered. Over residues 66–76 (IDVEVKEKTKS) the composition is skewed to basic and acidic residues.

This sequence belongs to the TatA/E family. As to quaternary structure, the Tat system comprises two distinct complexes: a TatABC complex, containing multiple copies of TatA, TatB and TatC subunits, and a separate TatA complex, containing only TatA subunits. Substrates initially bind to the TatABC complex, which probably triggers association of the separate TatA complex to form the active translocon.

The protein localises to the cell inner membrane. In terms of biological role, part of the twin-arginine translocation (Tat) system that transports large folded proteins containing a characteristic twin-arginine motif in their signal peptide across membranes. TatA could form the protein-conducting channel of the Tat system. The polypeptide is Sec-independent protein translocase protein TatA (Dechloromonas aromatica (strain RCB)).